Here is a 350-residue protein sequence, read N- to C-terminus: Phenylalanine--tRNA ligase alpha subunit (350 aa).

Mg(2+) is bound at residue glutamate 260.

The protein belongs to the class-II aminoacyl-tRNA synthetase family. Phe-tRNA synthetase alpha subunit type 1 subfamily. In terms of assembly, tetramer of two alpha and two beta subunits. Mg(2+) is required as a cofactor.

The protein resides in the cytoplasm. It catalyses the reaction tRNA(Phe) + L-phenylalanine + ATP = L-phenylalanyl-tRNA(Phe) + AMP + diphosphate + H(+). The polypeptide is Phenylalanine--tRNA ligase alpha subunit (Mycoplasma capricolum subsp. capricolum (strain California kid / ATCC 27343 / NCTC 10154)).